The primary structure comprises 114 residues: Histone H2A.Z-specific chaperone chz-1 (114 aa).

Over residues 1–22 the composition is skewed to polar residues; that stretch reads MSTENGTTDTTLAGTAEANTPF. The disordered stretch occupies residues 1–114; that stretch reads MSTENGTTDT…FVPEDEEMEE (114 aa). The span at 24–40 shows a compositional bias: basic and acidic residues; sequence SKGKGKAAAESEDHPMG. 2 stretches are compositionally biased toward acidic residues: residues 41 to 68 and 93 to 114; these read EAED…EEID and PAEE…EMEE.

It belongs to the CHZ1 family. As to quaternary structure, forms a heterotrimer with H2A.Z-H2B, stabilizing the association of the histone dimer. Also, with a lower affinity, forms a heterotrimer with H2A-H2B.

The protein localises to the nucleus. In terms of biological role, forms a chaperone-bound H2A.Z-H2B complex that acts as a source for SWR1 complex-dependent H2A to H2A.Z histone replacement in chromatin. This Neurospora crassa (strain ATCC 24698 / 74-OR23-1A / CBS 708.71 / DSM 1257 / FGSC 987) protein is Histone H2A.Z-specific chaperone chz-1 (chz-1).